The chain runs to 175 residues: Protein-export protein SecB (175 aa).

It belongs to the SecB family. As to quaternary structure, homotetramer, a dimer of dimers. One homotetramer interacts with 1 SecA dimer.

It is found in the cytoplasm. In terms of biological role, one of the proteins required for the normal export of preproteins out of the cell cytoplasm. It is a molecular chaperone that binds to a subset of precursor proteins, maintaining them in a translocation-competent state. It also specifically binds to its receptor SecA. This Ehrlichia chaffeensis (strain ATCC CRL-10679 / Arkansas) protein is Protein-export protein SecB.